The primary structure comprises 104 residues: DNA-directed RNA polymerase subunit omega (104 aa).

Belongs to the RNA polymerase subunit omega family. The RNAP catalytic core consists of 2 alpha, 1 beta, 1 beta' and 1 omega subunit. When a sigma factor is associated with the core the holoenzyme is formed, which can initiate transcription.

It catalyses the reaction RNA(n) + a ribonucleoside 5'-triphosphate = RNA(n+1) + diphosphate. Promotes RNA polymerase assembly. Latches the N- and C-terminal regions of the beta' subunit thereby facilitating its interaction with the beta and alpha subunits. This chain is DNA-directed RNA polymerase subunit omega, found in Streptococcus suis (strain 05ZYH33).